Here is a 231-residue protein sequence, read N- to C-terminus: Probable cell wall protein ARB_06477 (231 aa).

A signal peptide spans 1 to 17 (MRSVLYLLFTAVAAVAA). The tract at residues 107–206 (TPSFMVDGAT…TGMPTSSGAP (100 aa)) is disordered. Low complexity predominate over residues 121-204 (TGPTTSRTSM…SSTGMPTSSG (84 aa)). Ser203 is lipidated: GPI-anchor amidated serine. A propeptide spans 204 to 231 (GAPDPNGAVSLALPGGLLSIVLSLMALL) (removed in mature form).

The protein belongs to the SRP1/TIP1 family. Post-translationally, the GPI-anchor is attached to the protein in the endoplasmic reticulum and serves to target the protein to the cell surface. There, the glucosamine-inositol phospholipid moiety is cleaved off and the GPI-modified mannoprotein is covalently attached via its lipidless GPI glycan remnant to the 1,6-beta-glucan of the outer cell wall layer.

The protein resides in the cell membrane. The protein localises to the secreted. It is found in the cell wall. In terms of biological role, probable component of the cell wall. The sequence is that of Probable cell wall protein ARB_06477 from Arthroderma benhamiae (strain ATCC MYA-4681 / CBS 112371) (Trichophyton mentagrophytes).